Here is an 896-residue protein sequence, read N- to C-terminus: Trehalose-phosphatase (896 aa).

The glycosyltransferase stretch occupies residues 1–554 (MTTTAQDNSP…SNDDMERKMT (554 aa)).

In the N-terminal section; belongs to the glycosyltransferase 20 family. It in the C-terminal section; belongs to the trehalose phosphatase family. The trehalose synthase complex is composed of the two catalytic subunits TPS1 and TPS2, and at least one of the two regulatory subunits TPS3 or TSL1. Requires Mg(2+) as cofactor.

The protein resides in the cytoplasm. It catalyses the reaction alpha,alpha-trehalose 6-phosphate + H2O = alpha,alpha-trehalose + phosphate. The protein operates within carbohydrate biosynthesis. Inhibited by EDTA. In terms of biological role, phosphatase catalytic subunit of the trehalose synthase complex that catalyzes the production of trehalose from glucose-6-phosphate and UDP-alpha-D-glucose in a two step process. This chain is Trehalose-phosphatase, found in Saccharomyces cerevisiae (strain ATCC 204508 / S288c) (Baker's yeast).